We begin with the raw amino-acid sequence, 397 residues long: Putative F-box protein At1g26510 (397 aa).

The interval 1 to 23 is disordered; sequence MRTRSKKTKTVNNNNDLQKSEEK. The F-box domain maps to 24 to 71; sequence QKFDQLPLDLEIEMFRRLPLKSVARFLTLSKSCATTIRSPSFITSFPS.

The polypeptide is Putative F-box protein At1g26510 (Arabidopsis thaliana (Mouse-ear cress)).